A 213-amino-acid polypeptide reads, in one-letter code: Type II restriction enzyme BamHI (213 aa).

Mg(2+) is bound by residues glutamate 77, aspartate 94, glutamate 111, and phenylalanine 112. Residue glutamate 113 is the Proton acceptor of the active site.

In terms of assembly, homodimer. Mg(2+) serves as cofactor.

The enzyme catalyses Endonucleolytic cleavage of DNA to give specific double-stranded fragments with terminal 5'-phosphates.. Functionally, a P subtype restriction enzyme that recognizes the double-stranded sequence 5'-GGATCC-3' and cleaves after G-1. This is Type II restriction enzyme BamHI from Bacillus amyloliquefaciens (Bacillus velezensis).